The following is a 408-amino-acid chain: Serine/threonine-protein kinase ATG1t (408 aa).

In terms of domain architecture, Protein kinase spans Tyr-7–Val-272. ATP is bound by residues Leu-13 to Val-21 and Lys-36. Asp-129 acts as the Proton acceptor in catalysis.

This sequence belongs to the protein kinase superfamily. Ser/Thr protein kinase family.

It is found in the cytoplasmic vesicle. It localises to the autophagosome. Functionally, serine/threonine protein kinase involved in autophagy. The ATG1-ATG13 protein kinase complex regulates downstream events required for autophagosome enclosure and/or vacuolar delivery. The protein is Serine/threonine-protein kinase ATG1t of Arabidopsis thaliana (Mouse-ear cress).